A 337-amino-acid polypeptide reads, in one-letter code: Phenylalanine--tRNA ligase alpha subunit (337 aa).

E258 lines the Mg(2+) pocket.

This sequence belongs to the class-II aminoacyl-tRNA synthetase family. Phe-tRNA synthetase alpha subunit type 1 subfamily. In terms of assembly, tetramer of two alpha and two beta subunits. Requires Mg(2+) as cofactor.

Its subcellular location is the cytoplasm. The enzyme catalyses tRNA(Phe) + L-phenylalanine + ATP = L-phenylalanyl-tRNA(Phe) + AMP + diphosphate + H(+). The polypeptide is Phenylalanine--tRNA ligase alpha subunit (Burkholderia cenocepacia (strain ATCC BAA-245 / DSM 16553 / LMG 16656 / NCTC 13227 / J2315 / CF5610) (Burkholderia cepacia (strain J2315))).